We begin with the raw amino-acid sequence, 260 residues long: Transmembrane protein 70, mitochondrial (260 aa).

Residues 1-81 constitute a mitochondrion transit peptide; the sequence is MLFLALGSPW…PVYWEGYVRF (81 aa). Residues 82-102 lie on the Mitochondrial matrix side of the membrane; sequence LNTPSDKSEDGRLIYTGNMAR. A helical transmembrane segment spans residues 103-123; the sequence is AVFGVKCFSYSTSLIGLTFLP. Residues 124–141 lie on the Mitochondrial intermembrane side of the membrane; the sequence is YIFTQNNAISESVPLPIQ. A helical membrane pass occupies residues 142 to 162; it reads IIFYGIMGSFTVITPVLLHFI. Residues 163–260 are Mitochondrial matrix-facing; sequence TKGYVIRLYH…SEEKRHKDDK (98 aa).

This sequence belongs to the TMEM70 family. As to quaternary structure, homooligomer. Interacts (homooligomer form) with ATP5MC1; this interaction facilitates the oligomer formation of subunit c/ATP5MC1 (c-ring) and the c-ring membrane insertion and also protects ATP5MC1 against intramitochondrial proteolysis. Interacts with the core subunits TMEM126B, NDUFAF1, ECSIT and ACAD9 of the MCIA complex. Interacts with ATP5MC3, TMEM242 and TIMMDC1. Lower expressed in the heart than in the liver (at protein level).

The protein localises to the mitochondrion inner membrane. Its function is as follows. Scaffold protein that participates in the c-ring assembly of mitochondrial ATP synthase (F(1)F(0) ATP synthase or complex V) by facilitating the membrane insertion and oligomer formation of the subunit c/ATP5MC1 through its interaction. Therefore, participates in the early stage of mitochondrial ATP synthase biogenesis and also protects subunit c/ATP5MC1 against intramitochondrial proteolysis. In addition, binds the mitochondrial proton-transporting ATP synthase complexes I and may play a role in the stability of its membrane-bound subassemblies. In Homo sapiens (Human), this protein is Transmembrane protein 70, mitochondrial.